Here is a 490-residue protein sequence, read N- to C-terminus: Ribulose bisphosphate carboxylase large chain (490 aa).

Substrate-binding residues include asparagine 127 and threonine 177. Residue lysine 179 is the Proton acceptor of the active site. Lysine 181 contacts substrate. Mg(2+)-binding residues include lysine 205, aspartate 207, and glutamate 208. Residue lysine 205 is modified to N6-carboxylysine. Histidine 297 acts as the Proton acceptor in catalysis. Residues arginine 298, histidine 330, and serine 382 each coordinate substrate.

The protein belongs to the RuBisCO large chain family. Type I subfamily. As to quaternary structure, heterohexadecamer of 8 large chains and 8 small chains. Mg(2+) serves as cofactor.

The protein resides in the plastid. It is found in the chloroplast. It catalyses the reaction 2 (2R)-3-phosphoglycerate + 2 H(+) = D-ribulose 1,5-bisphosphate + CO2 + H2O. The catalysed reaction is D-ribulose 1,5-bisphosphate + O2 = 2-phosphoglycolate + (2R)-3-phosphoglycerate + 2 H(+). In terms of biological role, ruBisCO catalyzes two reactions: the carboxylation of D-ribulose 1,5-bisphosphate, the primary event in carbon dioxide fixation, as well as the oxidative fragmentation of the pentose substrate in the photorespiration process. Both reactions occur simultaneously and in competition at the same active site. This chain is Ribulose bisphosphate carboxylase large chain, found in Trieres chinensis (Marine centric diatom).